The following is a 641-amino-acid chain: Chaperone protein DnaK (641 aa).

Phosphothreonine; by autocatalysis is present on threonine 199. Residues 602-641 (MYADQADQAQQAGGQEEGQAKSADDAVDAEFEEVKDDDKK) are disordered. The span at 604-615 (ADQADQAQQAGG) shows a compositional bias: low complexity. The span at 626 to 641 (DAVDAEFEEVKDDDKK) shows a compositional bias: acidic residues.

This sequence belongs to the heat shock protein 70 family.

Acts as a chaperone. The protein is Chaperone protein DnaK of Marinobacter nauticus (strain ATCC 700491 / DSM 11845 / VT8) (Marinobacter aquaeolei).